Reading from the N-terminus, the 171-residue chain is Inosine/xanthosine triphosphatase (171 aa).

Substrate is bound at residue 8-13 (TTNPAK). Glu-38 lines the Mg(2+) pocket.

This sequence belongs to the YjjX NTPase family. In terms of assembly, homodimer. Mg(2+) serves as cofactor. The cofactor is Mn(2+).

The enzyme catalyses XTP + H2O = XDP + phosphate + H(+). The catalysed reaction is ITP + H2O = IDP + phosphate + H(+). Its function is as follows. Phosphatase that hydrolyzes non-canonical purine nucleotides such as XTP and ITP to their respective diphosphate derivatives. Probably excludes non-canonical purines from DNA/RNA precursor pool, thus preventing their incorporation into DNA/RNA and avoiding chromosomal lesions. The chain is Inosine/xanthosine triphosphatase from Klebsiella pneumoniae (strain 342).